We begin with the raw amino-acid sequence, 1143 residues long: Disease resistance protein Piks-1 (1143 aa).

Residues 1–190 are structured coiled coil (CC) domain; that stretch reads MEAAAMAVTA…PLRIMGGEMQ (190 aa). The HMA domain maps to 189–258; the sequence is MQKIVFKIPM…KVGPAMFLEV (70 aa). Residues 191–264 form an HMA-like domain region; the sequence is KIVFKIPMVD…FLEVSQAKED (74 aa). The NB-ARC domain maps to 282 to 570; that stretch reads HEVKTICILG…WIAEGFVSEE (289 aa). LRR repeat units follow at residues 681–706, 708–731, 732–754, 756–777, 778–800, 802–823, 824–848, 945–968, 979–1002, and 1004–1027; these read FKRLRVLDLEDNKDIQDSHLQGICEQ, SLRVRYLGLKGTRIRKLPQEMRKL, KHLEILYVGSTRISELPQEIGEL, HLRILDVRNTDITELPLQIREL, QHLHTLDVRNTPISELPPQVGKL, NLKIMCVRSTGVRELPKEIGEL, NHLQTLDVRNTRVRELPWQAGQISQ, MPNLQTLVLRFEALPRQPITINGT, DSRVPRIAFHEDAMPNLKLLEFKF, and AGPASNDAIGITNLKSLQKVVFRC.

The protein belongs to the disease resistance NB-LRR family. Interacts with AVR-Pik through its N-terminal part containing the HMA-like domain.

Its function is as follows. Disease resistance (R) protein that specifically recognizes the AVR-Pik effector avirulence protein from M.oryzae. Resistance proteins guard the plant against pathogens that contain an appropriate avirulence protein via an indirect interaction with this avirulence protein. That triggers a defense system including the hypersensitive response, which restricts the pathogen growth. This chain is Disease resistance protein Piks-1, found in Oryza sativa subsp. japonica (Rice).